We begin with the raw amino-acid sequence, 273 residues long: Probable ribosomal RNA small subunit methyltransferase A (273 aa).

Residues Asn-23, Leu-25, Gly-50, Glu-71, Asp-95, and Asn-110 each coordinate S-adenosyl-L-methionine.

Belongs to the class I-like SAM-binding methyltransferase superfamily. rRNA adenine N(6)-methyltransferase family. RsmA subfamily.

It localises to the cytoplasm. Functionally, specifically dimethylates two adjacent adenosines in the loop of a conserved hairpin near the 3'-end of 16S rRNA in the 30S particle. May play a critical role in biogenesis of 30S subunits. The chain is Probable ribosomal RNA small subunit methyltransferase A from Thermococcus sibiricus (strain DSM 12597 / MM 739).